The following is a 417-amino-acid chain: Imidazolonepropionase (417 aa).

Fe(3+)-binding residues include histidine 77 and histidine 79. Zn(2+)-binding residues include histidine 77 and histidine 79. 4-imidazolone-5-propanoate-binding residues include arginine 86, tyrosine 149, and histidine 182. Position 149 (tyrosine 149) interacts with N-formimidoyl-L-glutamate. Residue histidine 247 participates in Fe(3+) binding. Residue histidine 247 coordinates Zn(2+). Glutamine 250 is a 4-imidazolone-5-propanoate binding site. Aspartate 322 contributes to the Fe(3+) binding site. Aspartate 322 serves as a coordination point for Zn(2+). Asparagine 324 and glycine 326 together coordinate N-formimidoyl-L-glutamate. Residue threonine 327 coordinates 4-imidazolone-5-propanoate.

Belongs to the metallo-dependent hydrolases superfamily. HutI family. Requires Zn(2+) as cofactor. Fe(3+) serves as cofactor.

The protein resides in the cytoplasm. It catalyses the reaction 4-imidazolone-5-propanoate + H2O = N-formimidoyl-L-glutamate. It functions in the pathway amino-acid degradation; L-histidine degradation into L-glutamate; N-formimidoyl-L-glutamate from L-histidine: step 3/3. In terms of biological role, catalyzes the hydrolytic cleavage of the carbon-nitrogen bond in imidazolone-5-propanoate to yield N-formimidoyl-L-glutamate. It is the third step in the universal histidine degradation pathway. The protein is Imidazolonepropionase of Cupriavidus necator (strain ATCC 17699 / DSM 428 / KCTC 22496 / NCIMB 10442 / H16 / Stanier 337) (Ralstonia eutropha).